The primary structure comprises 469 residues: MKDVEDIHRPMLNSLQSTSAKMKKIVLSVNAGSSSVKISAYSALFGQAPIQLAEAQISGLTAPPPTLRYTRHGEKVINDEEVKDQKVSTQADAFDILVKALIDDNGVPEISSKEDIAYICHRIVHGGDFVRPKLISDETYHNLEKLNDLAPLHNSTSLVIVHRCMSDMPKTTFNIACFDSQFHHTIPEHIRTYPINQDIARNNHLRKYGFHGISYAFITRATAEFLGKKVEDVNIIALHLGSGASACAIKGGKSLDNSMGLTPLAGLPGATRSGSVDPSLVFHYASDVGKLSPASTKDLHISRAEEILNKQSGWKALTGTTNFGTITAALDPSSSDTTSHLSPEEVAKMRLAFDIFVERICAYIGSYYVSLQGQVDALVFAGGIGEKSDRLRAAVIEQVSCLGFGPVDKEANETRVKEELDDSHDVIEIAPPNSKKGGKDGREHRVLVCKTDEQFEMARACAEDGEFWR.

A Mg(2+)-binding site is contributed by Asn-30. An ATP-binding site is contributed by Lys-37. Substrate is bound at residue Arg-122. Asp-179 serves as the catalytic Proton donor/acceptor. An ATP-binding site is contributed by 239 to 243 (HLGSG). Glu-453 contributes to the Mg(2+) binding site.

It belongs to the acetokinase family. Mg(2+) is required as a cofactor.

The enzyme catalyses acetate + ATP = acetyl phosphate + ADP. It functions in the pathway metabolic intermediate biosynthesis; acetyl-CoA biosynthesis; acetyl-CoA from acetate: step 1/2. The sequence is that of Probable acetate kinase from Neurospora crassa (strain ATCC 24698 / 74-OR23-1A / CBS 708.71 / DSM 1257 / FGSC 987).